The primary structure comprises 167 residues: Small ribosomal subunit protein uS5 (167 aa).

The region spanning 19–82 is the S5 DRBM domain; that stretch reads LTEKVLHINR…EAARKNMISC (64 aa).

Belongs to the universal ribosomal protein uS5 family. Part of the 30S ribosomal subunit. Contacts proteins S4 and S8.

Functionally, with S4 and S12 plays an important role in translational accuracy. Its function is as follows. Located at the back of the 30S subunit body where it stabilizes the conformation of the head with respect to the body. This chain is Small ribosomal subunit protein uS5, found in Protochlamydia amoebophila (strain UWE25).